Here is a 142-residue protein sequence, read N- to C-terminus: Hemoglobin subunit alpha-A (142 aa).

Residues 2 to 142 enclose the Globin domain; that stretch reads VLSANDKTNV…VGNVLTAKYR (141 aa). O2 is bound at residue His59. Residue His88 coordinates heme b.

The protein belongs to the globin family. Heterotetramer of two alpha chains and two beta chains. In terms of tissue distribution, red blood cells.

Functionally, involved in oxygen transport from the lung to the various peripheral tissues. In Aquila chrysaetos (Golden eagle), this protein is Hemoglobin subunit alpha-A (HBAA).